A 180-amino-acid chain; its full sequence is Adenine phosphoribosyltransferase (180 aa).

This sequence belongs to the purine/pyrimidine phosphoribosyltransferase family. Homodimer.

The protein localises to the cytoplasm. The enzyme catalyses AMP + diphosphate = 5-phospho-alpha-D-ribose 1-diphosphate + adenine. It participates in purine metabolism; AMP biosynthesis via salvage pathway; AMP from adenine: step 1/1. Catalyzes a salvage reaction resulting in the formation of AMP, that is energically less costly than de novo synthesis. The chain is Adenine phosphoribosyltransferase from Marinomonas sp. (strain MWYL1).